The chain runs to 630 residues: Cytochrome B pre-mRNA-processing protein 2 (630 aa).

It is found in the mitochondrion. Its function is as follows. Appears to be specifically required for the splicing of the terminal intron (bI5) of the cytochrome b pre-mRNA. Can also stimulates the splicing of the omega intron of the precursor of large ribosomal RNA. The protein is Cytochrome B pre-mRNA-processing protein 2 (CBP2) of Saccharomyces paradoxus (Yeast).